Here is a 91-residue protein sequence, read N- to C-terminus: Probable Fe(2+)-trafficking protein (91 aa).

It belongs to the Fe(2+)-trafficking protein family.

Functionally, could be a mediator in iron transactions between iron acquisition and iron-requiring processes, such as synthesis and/or repair of Fe-S clusters in biosynthetic enzymes. The sequence is that of Probable Fe(2+)-trafficking protein from Burkholderia multivorans (strain ATCC 17616 / 249).